The sequence spans 342 residues: MPKDQNLDIARKQDHIEINLTKNVESTLKSGFESIQFIHNALPEINYDIIDTSTTFLGKYLQAPILISSMTGGTARARDINYRLAQVAQKAGIAMGLGSMRVLLTKPDTITTFAIRHIAPDIPLLANIGAVQLNYGVTPKECQYLVDVVKADALILHLNVLQELTQPEGNRNWENLLPRIQELVNYLSVPVVVKEVGYGLSKKVAESLIKVGVEVLDIAGSGGTSWSQVEAYRATNSLQNRIASSFISWGIPTLDSLKMVREVSGNIAIIASGGLKSGIDGAKAIRMGASIFGLAGQLLKAADISENLVSEEIQLIIEQLKITMICTGSRTLKDLAKAEIRL.

11–12 is a binding site for substrate; the sequence is RK. FMN is bound by residues serine 68, 69 to 71, serine 99, and asparagine 127; that span reads SMT. 99 to 101 serves as a coordination point for substrate; the sequence is SMR. Glutamine 162 is a substrate binding site. Glutamate 163 provides a ligand contact to Mg(2+). Residues lysine 194, threonine 224, 274 to 276, and 295 to 296 each bind FMN; these read GLK and AG.

This sequence belongs to the IPP isomerase type 2 family. As to quaternary structure, homooctamer. Dimer of tetramers. It depends on FMN as a cofactor. Requires NADPH as cofactor. Mg(2+) is required as a cofactor.

The protein resides in the cytoplasm. It carries out the reaction isopentenyl diphosphate = dimethylallyl diphosphate. Involved in the biosynthesis of isoprenoids. Catalyzes the 1,3-allylic rearrangement of the homoallylic substrate isopentenyl (IPP) to its allylic isomer, dimethylallyl diphosphate (DMAPP). This chain is Isopentenyl-diphosphate delta-isomerase, found in Rickettsia akari (strain Hartford).